The following is a 206-amino-acid chain: Urease accessory protein UreE (206 aa).

Residues 136–206 (PEGGAYAEPS…HGHAHAHDRK (71 aa)) are disordered. Basic and acidic residues-rich tracts occupy residues 148–169 (QGHDEHDHHHGHDHHHDHGGHE) and 177–191 (HGHAHDDHVHDEHCG). Residues 192–206 (HGHHHHGHAHAHDRK) are compositionally biased toward basic residues.

Belongs to the UreE family.

It is found in the cytoplasm. Its function is as follows. Involved in urease metallocenter assembly. Binds nickel. Probably functions as a nickel donor during metallocenter assembly. The chain is Urease accessory protein UreE from Bradyrhizobium sp. (strain BTAi1 / ATCC BAA-1182).